A 399-amino-acid chain; its full sequence is Acetate kinase (399 aa).

N7 serves as a coordination point for Mg(2+). K14 contacts ATP. Position 90 (R90) interacts with substrate. Catalysis depends on D147, which acts as the Proton donor/acceptor. ATP-binding positions include 207 to 211 (HLGNG), 282 to 284 (DFR), and 330 to 334 (GIGEN). E385 contributes to the Mg(2+) binding site.

It belongs to the acetokinase family. Homodimer. It depends on Mg(2+) as a cofactor. The cofactor is Mn(2+).

The protein resides in the cytoplasm. It carries out the reaction acetate + ATP = acetyl phosphate + ADP. Its pathway is metabolic intermediate biosynthesis; acetyl-CoA biosynthesis; acetyl-CoA from acetate: step 1/2. Its function is as follows. Catalyzes the formation of acetyl phosphate from acetate and ATP. Can also catalyze the reverse reaction. The polypeptide is Acetate kinase (Caldicellulosiruptor saccharolyticus (strain ATCC 43494 / DSM 8903 / Tp8T 6331)).